The primary structure comprises 527 residues: Phosphoethanolamine transferase OpgE (527 aa).

At 1-33 the chain is on the periplasmic side; it reads MNLTLKESLVTRSRVFSPWTAFYFLQSLLINLG. Residues 34–54 form a helical membrane-spanning segment; it reads LGYPFSLLYTAAFTAILLLLW. Residues 55–62 are Cytoplasmic-facing; the sequence is RTLPRVQK. A helical membrane pass occupies residues 63-83; it reads VLVGVSSLVAACYFPFAQAYG. Over 84-106 the chain is Periplasmic; sequence APNFNTLLALHSTNMEESTEILT. A helical membrane pass occupies residues 107–127; the sequence is IFPWYSYLVGLFIFALGVIAI. The Cytoplasmic portion of the chain corresponds to 128 to 146; sequence RRKKENEKARWNTFDSLCL. A helical transmembrane segment spans residues 147 to 167; that stretch reads VFSVATFFVAPVQNLAWGGVF. Residues 168-527 are Periplasmic-facing; the sequence is KLKDTGYPVF…LGTDIFDPKP (360 aa).

It belongs to the phosphoethanolamine transferase family.

Its subcellular location is the cell inner membrane. The protein operates within glycan metabolism; osmoregulated periplasmic glucan (OPG) biosynthesis. In terms of biological role, catalyzes the addition of a phosphoethanolamine moiety to the osmoregulated periplasmic glucan (OPG) backbone. The polypeptide is Phosphoethanolamine transferase OpgE (opgE) (Escherichia coli (strain K12)).